The chain runs to 345 residues: MTDKTSLSYKDAGVDIDAGNALVERIKGVSKRTRRPEVLGGLGGFGALCQIPAGYKEPVLVSGTDGVGTKLRLAIDLKKHDTVGIDLVAMCVNDLIVQGAEPLFFLDYYATGKLDVDTAAAVVTGIGVGCEQSGCALVGGETAEMPGMYEGEDYDIAGFCVGVVEKSEIIDGSKVGDGDALIALAASGPHSNGFSLVRKILEVSKADVHQPLGDTTLASALLEPTRIYVKPVLKLIKECEIHALSHITGGGFWENIPRVLPANTQAVIDEQSWQWPAVFSWLQQAGNVTRHEMYRTFNCGVGMIIALPADQLEKALTLLKAEGENAWHIGHIAKAVDGEEQVIIQ.

Belongs to the AIR synthase family.

The protein resides in the cytoplasm. It catalyses the reaction 2-formamido-N(1)-(5-O-phospho-beta-D-ribosyl)acetamidine + ATP = 5-amino-1-(5-phospho-beta-D-ribosyl)imidazole + ADP + phosphate + H(+). It participates in purine metabolism; IMP biosynthesis via de novo pathway; 5-amino-1-(5-phospho-D-ribosyl)imidazole from N(2)-formyl-N(1)-(5-phospho-D-ribosyl)glycinamide: step 2/2. The sequence is that of Phosphoribosylformylglycinamidine cyclo-ligase from Aeromonas salmonicida (strain A449).